The chain runs to 575 residues: Alpha-(1,6)-fucosyltransferase (575 aa).

Residues 1 to 9 (MRAWTGSWR) are Cytoplasmic-facing. A helical; Signal-anchor for type II membrane protein transmembrane segment spans residues 10 to 30 (WIMLILFAWGTLLFYIGGHLV). Over 31–575 (RDNDHPDHSS…KYPTYPEAEK (545 aa)) the chain is Lumenal. 3 cysteine pairs are disulfide-bonded: Cys204/Cys266, Cys212/Cys230, and Cys218/Cys222. In terms of domain architecture, GT23 spans 206–493 (KARKLVCNIN…PDASANFHSL (288 aa)). Ser278 is modified (phosphoserine). Residues 299–305 (PRPPYLP) carry the SH3-binding motif. The important for donor substrate binding stretch occupies residues 365 to 366 (RR). The cysteines at positions 465 and 472 are disulfide-linked. Residues 502-563 (QNAHNQIAVY…PSYKVREKIE (62 aa)) form the SH3 domain.

This sequence belongs to the glycosyltransferase 23 family. Tyrosine phosphorylated by PKDCC/VLK.

It localises to the golgi apparatus. The protein resides in the golgi stack membrane. It catalyses the reaction N(4)-{beta-D-GlcNAc-(1-&gt;2)-alpha-D-Man-(1-&gt;3)-[beta-D-GlcNAc-(1-&gt;2)-alpha-D-Man-(1-&gt;6)]-beta-D-Man-(1-&gt;4)-beta-D-GlcNAc-(1-&gt;4)-beta-D-GlcNAc}-L-asparaginyl-[protein] + GDP-beta-L-fucose = an N(4)-{beta-D-GlcNAc-(1-&gt;2)-alpha-D-Man-(1-&gt;3)-[beta-D-GlcNAc-(1-&gt;2)-alpha-D-Man-(1-&gt;6)]-beta-D-Man-(1-&gt;4)-beta-D-GlcNAc-(1-&gt;4)-[alpha-L-Fuc-(1-&gt;6)]-beta-D-GlcNAc}-L-asparaginyl-[protein] + GDP + H(+). It functions in the pathway protein modification; protein glycosylation. Catalyzes the addition of fucose in alpha 1-6 linkage to the first GlcNAc residue, next to the peptide chains in N-glycans. The polypeptide is Alpha-(1,6)-fucosyltransferase (Fut8) (Mus musculus (Mouse)).